The primary structure comprises 206 residues: Ribosomal RNA small subunit methyltransferase G (206 aa).

Residues Gly74, Leu79, 125 to 126 (VE), and Arg140 each bind S-adenosyl-L-methionine.

The protein belongs to the methyltransferase superfamily. RNA methyltransferase RsmG family.

It localises to the cytoplasm. It catalyses the reaction guanosine(527) in 16S rRNA + S-adenosyl-L-methionine = N(7)-methylguanosine(527) in 16S rRNA + S-adenosyl-L-homocysteine. Specifically methylates the N7 position of guanine in position 527 of 16S rRNA. The polypeptide is Ribosomal RNA small subunit methyltransferase G (Shewanella frigidimarina (strain NCIMB 400)).